Reading from the N-terminus, the 485-residue chain is Sulfate adenylyltransferase subunit 1 (485 aa).

Residues 17 to 232 enclose the tr-type G domain; sequence KDLLRLLTAG…LETVHIDNDH (216 aa). The G1 stretch occupies residues 26 to 33; the sequence is GSVDDGKS. 26–33 contributes to the GTP binding site; sequence GSVDDGKS. Residues 84–88 are G2; it reads GITID. Residues 105–108 form a G3 region; sequence DTPG. Residues 105 to 109 and 160 to 163 each bind GTP; these read DTPGH and NKMD. Residues 160–163 form a G4 region; sequence NKMD. A G5 region spans residues 197–199; the sequence is SAL.

This sequence belongs to the TRAFAC class translation factor GTPase superfamily. Classic translation factor GTPase family. CysN/NodQ subfamily. In terms of assembly, heterodimer composed of CysD, the smaller subunit, and CysN.

The enzyme catalyses sulfate + ATP + H(+) = adenosine 5'-phosphosulfate + diphosphate. The protein operates within sulfur metabolism; hydrogen sulfide biosynthesis; sulfite from sulfate: step 1/3. With CysD forms the ATP sulfurylase (ATPS) that catalyzes the adenylation of sulfate producing adenosine 5'-phosphosulfate (APS) and diphosphate, the first enzymatic step in sulfur assimilation pathway. APS synthesis involves the formation of a high-energy phosphoric-sulfuric acid anhydride bond driven by GTP hydrolysis by CysN coupled to ATP hydrolysis by CysD. This chain is Sulfate adenylyltransferase subunit 1, found in Bacteroides thetaiotaomicron (strain ATCC 29148 / DSM 2079 / JCM 5827 / CCUG 10774 / NCTC 10582 / VPI-5482 / E50).